The chain runs to 298 residues: UDP-3-O-acyl-N-acetylglucosamine deacetylase (298 aa).

His79, His239, and Asp243 together coordinate Zn(2+). His266 serves as the catalytic Proton donor.

This sequence belongs to the LpxC family. Zn(2+) is required as a cofactor.

The enzyme catalyses a UDP-3-O-[(3R)-3-hydroxyacyl]-N-acetyl-alpha-D-glucosamine + H2O = a UDP-3-O-[(3R)-3-hydroxyacyl]-alpha-D-glucosamine + acetate. The protein operates within glycolipid biosynthesis; lipid IV(A) biosynthesis; lipid IV(A) from (3R)-3-hydroxytetradecanoyl-[acyl-carrier-protein] and UDP-N-acetyl-alpha-D-glucosamine: step 2/6. Functionally, catalyzes the hydrolysis of UDP-3-O-myristoyl-N-acetylglucosamine to form UDP-3-O-myristoylglucosamine and acetate, the committed step in lipid A biosynthesis. The protein is UDP-3-O-acyl-N-acetylglucosamine deacetylase of Wigglesworthia glossinidia brevipalpis.